Consider the following 701-residue polypeptide: Acetyl-coenzyme A synthetase, cytoplasmic (701 aa).

Positions 1–26 (MGLPEERRKSGSGSRAREETGAEGRV) are enriched in basic and acidic residues. A disordered region spans residues 1-37 (MGLPEERRKSGSGSRAREETGAEGRVRGWSPPPEVRR). The tract at residues 1-107 (MGLPEERRKS…GATTNICYNV (107 aa)) is interaction with TFEB. S30 is modified (phosphoserine). 219–222 (RGEK) provides a ligand contact to CoA. Phosphoserine occurs at positions 263, 265, and 267. T363 is a binding site for CoA. N6-acetyllysine is present on K418. Residues 439–441 (GEP), 463–468 (DTFWQT), D552, and R567 each bind ATP. Residues S575 and R636 each coordinate CoA. A Nuclear localization signal motif is present at residues 656 to 668 (KTRSGKIMRRVLR). S659 bears the Phosphoserine; by AMPK mark. An N6-acetyllysine modification is found at K661.

The protein belongs to the ATP-dependent AMP-binding enzyme family. As to quaternary structure, monomer. Interacts with TFEB. AMPK-mediated phosphorylated form at Ser-659 interacts with KPNA1; this interaction results in nuclear translocation of ACSS2. Interacts with the 'Thr-172' phosphorylated form of PRKAA2. Interacts with CREBBP. Reversibly acetylated at Lys-661. The acetyl-CoA synthase activity is inhibited by acetylation and activated by deacetylation mediated by the deacetylases SIRT1 and SIRT3. As to expression, expressed in the hippocampus.

It localises to the cytoplasm. The protein localises to the cytosol. Its subcellular location is the nucleus. The catalysed reaction is acetate + ATP + CoA = acetyl-CoA + AMP + diphosphate. The enzyme catalyses propanoate + ATP + CoA = propanoyl-CoA + AMP + diphosphate. With respect to regulation, inhibited by acetylation at Lys-661 and activated by deacetylation mediated by the deacetylases SIRT1 and SIRT3. Functionally, catalyzes the synthesis of acetyl-CoA from short-chain fatty acids. Acetate is the preferred substrate but can also utilize propionate with a much lower affinity. Nuclear ACSS2 promotes glucose deprivation-induced lysosomal biogenesis and autophagy, tumor cell survival and brain tumorigenesis. Glucose deprivation results in AMPK-mediated phosphorylation of ACSS2 leading to its translocation to the nucleus where it binds to TFEB and locally produces acetyl-CoA for histone acetylation in the promoter regions of TFEB target genes thereby activating their transcription. The regulation of genes associated with autophagy and lysosomal activity through ACSS2 is important for brain tumorigenesis and tumor survival. Acts as a chromatin-bound transcriptional coactivator that up-regulates histone acetylation and expression of neuronal genes. Can be recruited to the loci of memory-related neuronal genes to maintain a local acetyl-CoA pool, providing the substrate for histone acetylation and promoting the expression of specific genes, which is essential for maintaining long-term spatial memory. In Mus musculus (Mouse), this protein is Acetyl-coenzyme A synthetase, cytoplasmic (Acss2).